Consider the following 150-residue polypeptide: Large ribosomal subunit protein bL9 (150 aa).

The protein belongs to the bacterial ribosomal protein bL9 family.

Functionally, binds to the 23S rRNA. The polypeptide is Large ribosomal subunit protein bL9 (Albidiferax ferrireducens (strain ATCC BAA-621 / DSM 15236 / T118) (Rhodoferax ferrireducens)).